The following is a 257-amino-acid chain: Urease accessory protein UreD 3 (257 aa).

Positions 1–22 are disordered; that stretch reads MSVRATARLRAEPDGRDGTALP.

Belongs to the UreD family. As to quaternary structure, ureD, UreF and UreG form a complex that acts as a GTP-hydrolysis-dependent molecular chaperone, activating the urease apoprotein by helping to assemble the nickel containing metallocenter of UreC. The UreE protein probably delivers the nickel.

Its subcellular location is the cytoplasm. Required for maturation of urease via the functional incorporation of the urease nickel metallocenter. The polypeptide is Urease accessory protein UreD 3 (Streptomyces griseus subsp. griseus (strain JCM 4626 / CBS 651.72 / NBRC 13350 / KCC S-0626 / ISP 5235)).